The sequence spans 124 residues: Holo-[acyl-carrier-protein] synthase (124 aa).

Mg(2+) is bound by residues Asp8 and Glu57.

It belongs to the P-Pant transferase superfamily. AcpS family. Mg(2+) serves as cofactor.

It is found in the cytoplasm. The enzyme catalyses apo-[ACP] + CoA = holo-[ACP] + adenosine 3',5'-bisphosphate + H(+). Functionally, transfers the 4'-phosphopantetheine moiety from coenzyme A to a Ser of acyl-carrier-protein. This chain is Holo-[acyl-carrier-protein] synthase, found in Leptospira borgpetersenii serovar Hardjo-bovis (strain JB197).